The sequence spans 252 residues: 2-succinyl-6-hydroxy-2,4-cyclohexadiene-1-carboxylate synthase (252 aa).

It belongs to the AB hydrolase superfamily. MenH family. Monomer.

The enzyme catalyses 5-enolpyruvoyl-6-hydroxy-2-succinyl-cyclohex-3-ene-1-carboxylate = (1R,6R)-6-hydroxy-2-succinyl-cyclohexa-2,4-diene-1-carboxylate + pyruvate. Its pathway is quinol/quinone metabolism; 1,4-dihydroxy-2-naphthoate biosynthesis; 1,4-dihydroxy-2-naphthoate from chorismate: step 3/7. It functions in the pathway quinol/quinone metabolism; menaquinone biosynthesis. Functionally, catalyzes a proton abstraction reaction that results in 2,5-elimination of pyruvate from 2-succinyl-5-enolpyruvyl-6-hydroxy-3-cyclohexene-1-carboxylate (SEPHCHC) and the formation of 2-succinyl-6-hydroxy-2,4-cyclohexadiene-1-carboxylate (SHCHC). In Salmonella arizonae (strain ATCC BAA-731 / CDC346-86 / RSK2980), this protein is 2-succinyl-6-hydroxy-2,4-cyclohexadiene-1-carboxylate synthase.